Here is a 304-residue protein sequence, read N- to C-terminus: ADP-ribosyl cyclase/cyclic ADP-ribose hydrolase 1 (304 aa).

The Cytoplasmic segment spans residues 1–21 (MANYEFSQVSGDRPGCRLSRK). A helical; Signal-anchor for type II membrane protein transmembrane segment spans residues 22 to 44 (AQIGLGVGLLVLIALVVGIVVIL). The Extracellular segment spans residues 45-304 (LRPRSLLVWT…PEHPSCRLNT (260 aa)). 3 cysteine pairs are disulfide-bonded: C70–C86, C103–C184, and C164–C177. An N-linked (GlcNAc...) asparagine glycan is attached at N104. C123 is an active-site residue. An N-linked (GlcNAc...) asparagine glycan is attached at N124. Residue C205 is part of the active site. Residues N213 and N223 are each glycosylated (N-linked (GlcNAc...) asparagine). Cystine bridges form between C258–C279 and C291–C300.

Belongs to the ADP-ribosyl cyclase family. As to quaternary structure, homodimer.

The protein localises to the membrane. It catalyses the reaction NAD(+) = cyclic ADP-beta-D-ribose + nicotinamide + H(+). The catalysed reaction is nicotinate + NADP(+) = nicotinate-adenine dinucleotide phosphate + nicotinamide. The enzyme catalyses NAD(+) + H2O = ADP-D-ribose + nicotinamide + H(+). Functionally, synthesizes the second messengers cyclic ADP-ribose (cADPR) and nicotinate-adenine dinucleotide phosphate (NAADP), the former a second messenger for glucose-induced insulin secretion, the latter a Ca(2+) mobilizer. Also has cADPR hydrolase activity. This is ADP-ribosyl cyclase/cyclic ADP-ribose hydrolase 1 (Cd38) from Mus musculus (Mouse).